The sequence spans 138 residues: Small ribosomal subunit protein uS11c (138 aa).

Residues Met1–Arg24 are disordered. Basic residues predominate over residues Ser9–Arg24.

Belongs to the universal ribosomal protein uS11 family. As to quaternary structure, part of the 30S ribosomal subunit.

Its subcellular location is the plastid. It localises to the chloroplast. This is Small ribosomal subunit protein uS11c from Lemna minor (Common duckweed).